A 290-amino-acid chain; its full sequence is DegV domain-containing protein MG450 (290 aa).

Residues 3–289 enclose the DegV domain; that stretch reads IAFLVDSVSN…INSYAFLIQT (287 aa). Residues T65 and S97 each coordinate hexadecanoate.

May bind long-chain fatty acids, such as palmitate, and may play a role in lipid transport or fatty acid metabolism. This Mycoplasma genitalium (strain ATCC 33530 / DSM 19775 / NCTC 10195 / G37) (Mycoplasmoides genitalium) protein is DegV domain-containing protein MG450.